Consider the following 758-residue polypeptide: Relaxin receptor 1 (758 aa).

Residues 1–408 are Extracellular-facing; the sequence is MTSGPFFFCV…LENLLASIIQ (408 aa). Residues 26–63 form the LDL-receptor class A domain; sequence SCPLGSFPCGNISKCLPQLLHCNGVDDCGNQADEDNCG. Disulfide bonds link cysteine 27/cysteine 40, cysteine 34/cysteine 53, and cysteine 47/cysteine 62. N-linked (GlcNAc...) asparagine glycosylation is present at asparagine 36. Residues leucine 45, asparagine 48, valine 50, aspartate 52, aspartate 58, and glutamate 59 each coordinate Ca(2+). LRR repeat units lie at residues 105–125, 126–148, 149–172, 173–196, 198–220, 221–244, 246–269, 270–293, 294–317, 319–341, and 342–365; these read LCRD…PSVS, SNVT…SFRK, YHDL…AFRG, LHSL…VFED, HRLE…TFYG, LNSL…PLCQ, MPRL…TFIS, CNNL…AFTH, LQKL…IFKD, KELS…QFDY, and LAKL…MFRP. N-linked (GlcNAc...) asparagine glycosylation is present at asparagine 127. 2 N-linked (GlcNAc...) asparagine glycosylation sites follow: asparagine 264 and asparagine 272. An N-linked (GlcNAc...) asparagine glycan is attached at asparagine 325. A glycan (N-linked (GlcNAc...) asparagine) is linked at asparagine 368. A helical membrane pass occupies residues 409 to 429; sequence RVFVWVVSAITCFGNIFVICM. Topologically, residues 430-443 are cytoplasmic; sequence RPYIRSENKLHAMS. A helical transmembrane segment spans residues 444 to 464; sequence IMSLCCADCLMGVYLFVIGAF. The Extracellular segment spans residues 465-486; the sequence is DLKFRGEYRKHAQPWMESVHCQ. A disulfide bridge links cysteine 485 with cysteine 563. A helical membrane pass occupies residues 487–507; the sequence is FMGSLAVLSTEVSVLLLTFLT. The Cytoplasmic portion of the chain corresponds to 508–527; the sequence is LEKYICIVYPFRCLRPRKCR. Residues 528–548 form a helical membrane-spanning segment; sequence TVAVLIFIWITGFIVAFAPLG. Residues 549-577 lie on the Extracellular side of the membrane; that stretch reads NKEFFKNYYGTNGVCFPLHSEDTGSTGAQ. A helical membrane pass occupies residues 578 to 598; that stretch reads IYSVVIFLGINLVAFIIIVFS. Topologically, residues 599-629 are cytoplasmic; sequence YGSMFYSVHQSTITATEIQKQVKKEMILAKR. Residues 630–650 traverse the membrane as a helical segment; that stretch reads FFFIVFTDALCWIPIFILKFL. Over 651-660 the chain is Extracellular; sequence SLIRVEIPDT. Residues 661–681 form a helical membrane-spanning segment; the sequence is ITSWVVIFILPINSALNPIIY. Residues 682-758 lie on the Cytoplasmic side of the membrane; it reads TLTTRPFKEM…SRSSRLNSYS (77 aa).

It belongs to the G-protein coupled receptor 1 family. In terms of assembly, interacts with C1QTNF8. Detected in brain cortex, and at low levels in testis.

It localises to the cell membrane. Receptor for relaxins. The activity of this receptor is mediated by G proteins leading to stimulation of adenylate cyclase and an increase of cAMP. Binding of the ligand may also activate a tyrosine kinase pathway that inhibits the activity of a phosphodiesterase that degrades cAMP. The chain is Relaxin receptor 1 (Rxfp1) from Rattus norvegicus (Rat).